The following is a 122-amino-acid chain: MATLSKKQQTQKRHKRLRRHLNGTNHRPRLAVFRSNNHIYAQVIDDEAQSTICSASTLDKDLREKLKASGGSCDASMAVGALLAQRALAKGIEQVVFDRGGNLYHGRVKALAKSAREAGLKF.

The tract at residues 1–27 (MATLSKKQQTQKRHKRLRRHLNGTNHR) is disordered. Positions 9-27 (QTQKRHKRLRRHLNGTNHR) are enriched in basic residues.

It belongs to the universal ribosomal protein uL18 family. As to quaternary structure, part of the 50S ribosomal subunit; part of the 5S rRNA/L5/L18/L25 subcomplex. Contacts the 5S and 23S rRNAs.

Functionally, this is one of the proteins that bind and probably mediate the attachment of the 5S RNA into the large ribosomal subunit, where it forms part of the central protuberance. The polypeptide is Large ribosomal subunit protein uL18 (Prochlorococcus marinus (strain MIT 9211)).